The following is a 334-amino-acid chain: Beta-hexosaminidase (334 aa).

Residues aspartate 57, arginine 65, arginine 128, and 158–159 (KH) contribute to the substrate site. The Proton donor/acceptor role is filled by histidine 171. Catalysis depends on aspartate 242, which acts as the Nucleophile.

The protein belongs to the glycosyl hydrolase 3 family. NagZ subfamily.

It localises to the cytoplasm. The catalysed reaction is Hydrolysis of terminal non-reducing N-acetyl-D-hexosamine residues in N-acetyl-beta-D-hexosaminides.. Its pathway is cell wall biogenesis; peptidoglycan recycling. In terms of biological role, plays a role in peptidoglycan recycling by cleaving the terminal beta-1,4-linked N-acetylglucosamine (GlcNAc) from peptide-linked peptidoglycan fragments, giving rise to free GlcNAc, anhydro-N-acetylmuramic acid and anhydro-N-acetylmuramic acid-linked peptides. In Methylococcus capsulatus (strain ATCC 33009 / NCIMB 11132 / Bath), this protein is Beta-hexosaminidase.